A 184-amino-acid chain; its full sequence is Ras-related protein O-Krev (184 aa).

Residue 10–17 participates in GTP binding; the sequence is GSGGVGKS. Residues 32-40 carry the Effector region motif; it reads YDPTIEDSY. Residues 57–61 and 116–119 each bind GTP; these read DTAGT and NKCD. Cys-181 bears the Cysteine methyl ester mark. Residue Cys-181 is the site of S-geranylgeranyl cysteine attachment. Residues 182 to 184 constitute a propeptide, removed in mature form; that stretch reads TLL.

The protein belongs to the small GTPase superfamily. Ras family.

The protein localises to the cell membrane. The enzyme catalyses GTP + H2O = GDP + phosphate + H(+). The polypeptide is Ras-related protein O-Krev (Diplobatis ommata (Ocellated electric ray)).